A 545-amino-acid polypeptide reads, in one-letter code: ATP synthase subunit alpha (545 aa).

174–181 (GDRKTGKT) contacts ATP.

The protein belongs to the ATPase alpha/beta chains family. As to quaternary structure, F-type ATPases have 2 components, CF(1) - the catalytic core - and CF(0) - the membrane proton channel. CF(1) has five subunits: alpha(3), beta(3), gamma(1), delta(1), epsilon(1). CF(0) has three main subunits: a(1), b(2) and c(9-12). The alpha and beta chains form an alternating ring which encloses part of the gamma chain. CF(1) is attached to CF(0) by a central stalk formed by the gamma and epsilon chains, while a peripheral stalk is formed by the delta and b chains.

The protein localises to the cell membrane. It carries out the reaction ATP + H2O + 4 H(+)(in) = ADP + phosphate + 5 H(+)(out). Produces ATP from ADP in the presence of a proton gradient across the membrane. The alpha chain is a regulatory subunit. The protein is ATP synthase subunit alpha of Cutibacterium acnes (strain DSM 16379 / KPA171202) (Propionibacterium acnes).